The following is a 613-amino-acid chain: DNA mismatch repair protein MutL (613 aa).

The disordered stretch occupies residues 364-393 (EPAVARQPEAPRYSSGASAPRPTGANYPHA).

This sequence belongs to the DNA mismatch repair MutL/HexB family.

Its function is as follows. This protein is involved in the repair of mismatches in DNA. It is required for dam-dependent methyl-directed DNA mismatch repair. May act as a 'molecular matchmaker', a protein that promotes the formation of a stable complex between two or more DNA-binding proteins in an ATP-dependent manner without itself being part of a final effector complex. The chain is DNA mismatch repair protein MutL from Enterobacter sp. (strain 638).